The sequence spans 384 residues: Dual-specificity RNA methyltransferase RlmN (384 aa).

Residue glutamate 105 is the Proton acceptor of the active site. The Radical SAM core domain maps to glutamate 111 to aspartate 350. A disulfide bridge links cysteine 118 with cysteine 355. Residues cysteine 125, cysteine 129, and cysteine 132 each coordinate [4Fe-4S] cluster. S-adenosyl-L-methionine-binding positions include glycine 179 to glutamate 180, serine 211, serine 233 to histidine 235, and asparagine 312. Catalysis depends on cysteine 355, which acts as the S-methylcysteine intermediate.

The protein belongs to the radical SAM superfamily. RlmN family. It depends on [4Fe-4S] cluster as a cofactor.

The protein resides in the cytoplasm. The catalysed reaction is adenosine(2503) in 23S rRNA + 2 reduced [2Fe-2S]-[ferredoxin] + 2 S-adenosyl-L-methionine = 2-methyladenosine(2503) in 23S rRNA + 5'-deoxyadenosine + L-methionine + 2 oxidized [2Fe-2S]-[ferredoxin] + S-adenosyl-L-homocysteine. It carries out the reaction adenosine(37) in tRNA + 2 reduced [2Fe-2S]-[ferredoxin] + 2 S-adenosyl-L-methionine = 2-methyladenosine(37) in tRNA + 5'-deoxyadenosine + L-methionine + 2 oxidized [2Fe-2S]-[ferredoxin] + S-adenosyl-L-homocysteine. Functionally, specifically methylates position 2 of adenine 2503 in 23S rRNA and position 2 of adenine 37 in tRNAs. m2A2503 modification seems to play a crucial role in the proofreading step occurring at the peptidyl transferase center and thus would serve to optimize ribosomal fidelity. This Shigella boydii serotype 18 (strain CDC 3083-94 / BS512) protein is Dual-specificity RNA methyltransferase RlmN.